An 815-amino-acid polypeptide reads, in one-letter code: Minichromosome loss protein 1 (815 aa).

WD repeat units lie at residues 11 to 50 (AHTDGLTRLAYTRDGKFLLTVGSNQVIRKFQVGSDEEPDS), 53 to 90 (NHQDPITGIAVAENYFCTCSEDATVCVYPIDSPTEHTL), 93 to 132 (RTTLPIRDVAYSVDGNWIAIASDETAVKVVSSTDSSQIFS), 135 to 174 (PAKASNKHVTYSPNGNFLAVSSCNGILYFYDTQTRELIKF), and 228 to 267 (ENHSGVTDISWSSNGMYIAASFKKGGILIWDTQSHEVVVE). Residues 306–362 (LKEENDPTKPLTSSKSKNRTSKELDDLFGSDDEQSQNVNDLDGNSANEENEFINHDG) form a disordered region. Positions 340 to 352 (SQNVNDLDGNSAN) are enriched in polar residues. The stretch at 517–553 (ENESPVTISLSSSVVLVCTSAGYVRVFSRQGFPISIH) is one WD 6 repeat.

As to quaternary structure, interacts with pof3 and pol1.

It is found in the nucleus. The protein localises to the chromosome. In terms of biological role, has a role in regulating DNA replication complexes. Acts as a regulator of post DNA replication initiation. Associates with chromatin during G1 and S phases of mitosis. Required for the transcriptional repression of the outer repeats of the centromeric region. Acts as a polymerase alpha replication accessory factor and is important for S-phase DNA damage survival. Plays a role in lagging-strand synthesis and Ozaki fragment processing, in addition to DNA repair. This chain is Minichromosome loss protein 1 (mcl1), found in Schizosaccharomyces pombe (strain 972 / ATCC 24843) (Fission yeast).